We begin with the raw amino-acid sequence, 97 residues long: MKSVVFASLIASALAVPTELAPRTDVSSLCPAGLYSVPQCCATDILGVARLDCKAPKQTPRNADEFKNICAKGGQQAACCVVPVAGQSLFCMTPVGI.

A signal peptide spans 1-15 (MKSVVFASLIASALA). 3 disulfides stabilise this stretch: Cys-30-Cys-79, Cys-40-Cys-53, and Cys-80-Cys-91.

This sequence belongs to the cerato-ulmin hydrophobin family.

It localises to the secreted. The protein resides in the cell wall. Its subcellular location is the vacuole. The protein localises to the cytoplasmic vesicle. Functionally, aerial growth, conidiation, and dispersal of filamentous fungi in the environment rely upon a capability of their secreting small amphipathic proteins called hydrophobins (HPBs) with low sequence identity. Class I can self-assemble into an outermost layer of rodlet bundles on aerial cell surfaces, conferring cellular hydrophobicity that supports fungal growth, development and dispersal; whereas Class II form highly ordered films at water-air interfaces through intermolecular interactions but contribute nothing to the rodlet structure. Hyd2A contributes to certain cell wall-related features, such as hydrophobicity but is not involved in cell wall-related events during fungal proliferation in host hemocoel. Does not contribute to conidial hydrophobicity. Involved in insect hemocoel colonization independent of cell hydrophobicity, as well as in the asexual development. The polypeptide is Class II hydrophobin A (Beauveria bassiana (strain ARSEF 2860) (White muscardine disease fungus)).